Here is a 1219-residue protein sequence, read N- to C-terminus: A disintegrin and metalloproteinase with thrombospondin motifs 18 (1219 aa).

A signal peptide spans 1-47; sequence MECALLCLCALRAAGPGPPWGPAGLGRLAKALQLCCFCCASVAVALA. A propeptide spanning residues 48–284 is cleaved from the precursor; the sequence is SDSGSSGGSG…EYGGTGRPRR (237 aa). Asn151 and Asn190 each carry an N-linked (GlcNAc...) asparagine glycan. A disordered region spans residues 217–248; sequence YPGSQRTYPGHSPSHTPPASQSQEPEYSHRRW. The span at 218–241 shows a compositional bias: polar residues; sequence PGSQRTYPGHSPSHTPPASQSQEP. Residues 293 to 498 form the Peptidase M12B domain; sequence LNVETLVVAD…PQAGCLVDEP (206 aa). Disulfide bonds link Cys369/Cys420, Cys395/Cys402, Cys414/Cys493, Cys453/Cys477, Cys521/Cys546, Cys532/Cys553, Cys541/Cys572, Cys566/Cys577, Cys601/Cys638, Cys605/Cys643, and Cys616/Cys628. His436 provides a ligand contact to Zn(2+). Glu437 is a catalytic residue. Residues His440 and His446 each coordinate Zn(2+). Residues 589–644 enclose the TSP type-1 1 domain; that stretch reads HGQWSAWSKWSECSRTCGGGVKFQERHCSNPKPQYGGKYCPGSSRIYKLCNINPCP. Asn745, Asn838, Asn865, and Asn909 each carry an N-linked (GlcNAc...) asparagine glycan. 4 TSP type-1 domains span residues 931–990, 991–1049, 1052–1116, and 1121–1176; these read CPAY…NSHA, CPPE…GRCP, NRLQ…RTCP, and AVAS…NFCP. Positions 1182–1219 constitute a PLAC domain; that stretch reads DDPSCVDFFSWCHLVPQHGVCNHKFYGKQCCRSCTRKS.

Requires Zn(2+) as cofactor. The precursor is cleaved by a furin endopeptidase. Post-translationally, glycosylated. Can be O-fucosylated by POFUT2 on a serine or a threonine residue found within the consensus sequence C1-X(2)-(S/T)-C2-G of the TSP type-1 repeat domains where C1 and C2 are the first and second cysteine residue of the repeat, respectively. Fucosylated repeats can then be further glycosylated by the addition of a beta-1,3-glucose residue by the glucosyltransferase, B3GALTL. Fucosylation mediates the efficient secretion of ADAMTS family members. Can also be C-glycosylated with one or two mannose molecules on tryptophan residues within the consensus sequence W-X-X-W of the TPRs, and N-glycosylated. These other glycosylations can also facilitate secretion.

The protein resides in the secreted. It is found in the extracellular space. It localises to the extracellular matrix. The protein is A disintegrin and metalloproteinase with thrombospondin motifs 18 (Adamts18) of Mus musculus (Mouse).